A 298-amino-acid polypeptide reads, in one-letter code: Putative GATA zinc finger domain-containing protein 25 (298 aa).

Positions aspartate 4–glutamine 37 form a coiled coil. The interval glutamine 148 to glutamate 227 is disordered. Residues glutamate 183–glutamate 202 are compositionally biased toward acidic residues. Over residues asparagine 203–lysine 212 the composition is skewed to basic and acidic residues. The span at asparagine 214 to lysine 223 shows a compositional bias: basic residues. The segment at cysteine 229–cysteine 256 adopts a GATA-type; degenerate zinc-finger fold.

This chain is Putative GATA zinc finger domain-containing protein 25 (gtaY), found in Dictyostelium discoideum (Social amoeba).